We begin with the raw amino-acid sequence, 180 residues long: Centromere protein M (180 aa).

The protein localises to the nucleus. It localises to the chromosome. Its subcellular location is the centromere. Its function is as follows. Probable component of a centromeric complex involved in assembly of kinetochore proteins, mitotic progression and chromosome segregation. This chain is Centromere protein M (cenpm), found in Xenopus laevis (African clawed frog).